The sequence spans 385 residues: Succinyl-diaminopimelate desuccinylase (385 aa).

Zn(2+) is bound at residue His73. Asp75 is a catalytic residue. Asp106 lines the Zn(2+) pocket. Glu141 functions as the Proton acceptor in the catalytic mechanism. The Zn(2+) site is built by Glu142, Glu170, and His359.

This sequence belongs to the peptidase M20A family. DapE subfamily. Homodimer. Zn(2+) is required as a cofactor. Requires Co(2+) as cofactor.

The catalysed reaction is N-succinyl-(2S,6S)-2,6-diaminopimelate + H2O = (2S,6S)-2,6-diaminopimelate + succinate. The protein operates within amino-acid biosynthesis; L-lysine biosynthesis via DAP pathway; LL-2,6-diaminopimelate from (S)-tetrahydrodipicolinate (succinylase route): step 3/3. Its function is as follows. Catalyzes the hydrolysis of N-succinyl-L,L-diaminopimelic acid (SDAP), forming succinate and LL-2,6-diaminopimelate (DAP), an intermediate involved in the bacterial biosynthesis of lysine and meso-diaminopimelic acid, an essential component of bacterial cell walls. The polypeptide is Succinyl-diaminopimelate desuccinylase (Methylorubrum extorquens (strain CM4 / NCIMB 13688) (Methylobacterium extorquens)).